A 223-amino-acid polypeptide reads, in one-letter code: RNA-free ribonuclease P (223 aa).

Belongs to the HARP family.

The catalysed reaction is Endonucleolytic cleavage of RNA, removing 5'-extranucleotides from tRNA precursor.. Functionally, RNA-free RNase P that catalyzes the removal of the 5'-leader sequence from pre-tRNA to produce the mature 5'-terminus. This chain is RNA-free ribonuclease P, found in Methanococcus maripaludis (strain DSM 14266 / JCM 13030 / NBRC 101832 / S2 / LL).